The primary structure comprises 815 residues: Sodium/hydrogen exchanger 1 (815 aa).

Topologically, residues 1–98 (MVLRSGICGL…FPVLGIDYTH (98 aa)) are extracellular. Thr-42 is a glycosylation site (O-linked (GalNAc...) threonine). The segment at 42 to 79 (TASTIRSSEPPRERSIGDVTTAPPEVTPESRPVNHSVT) is disordered. The O-linked (GalNAc...) serine glycan is linked to Ser-56. Residues Thr-61, Thr-62, and Thr-68 are each glycosylated (O-linked (GalNAc...) threonine). N-linked (GlcNAc...) asparagine glycosylation occurs at Asn-75. Residues 99-121 (VRTPFEISLWILLACLMKIGFHV) form a helical membrane-spanning segment. The Cytoplasmic portion of the chain corresponds to 122–130 (IPTISSIVP). Residues 131–148 (ESCLLIVVGLLVGGLIKG) form a helical membrane-spanning segment. Over 149–158 (VGETPPFLQS) the chain is Extracellular. Residues 159-176 (DVFFLFLLPPIILDAGYF) form a helical membrane-spanning segment. Residues 177–186 (LPLRQFTENL) lie on the Cytoplasmic side of the membrane. The chain crosses the membrane as a helical span at residues 187-215 (GTILIFAVVGTLWNAFFLGGLMYAVCLVG). Over 216–222 (GEQINNI) the chain is Extracellular. The helical transmembrane segment at 223-249 (GLLDNLLFGSIISAVDPVAVLAVFEEI) threads the bilayer. Residues 250–252 (HIN) are Cytoplasmic-facing. Residues 253-283 (ELLHILVFGESLLNDAVTVVLYHLFEEFANY) traverse the membrane as a helical segment. The Extracellular portion of the chain corresponds to 284–287 (EHVG). A helical transmembrane segment spans residues 288-322 (IVDIFLGFLSFFVVALGGVLVGVVYGVIAAFTSRF). At 323–328 (TSHIRV) the chain is on the cytoplasmic side. Residues 329–341 (IEPLFVFLYSYMA) traverse the membrane as a helical segment. Residues 342–350 (YLSAELFHL) lie on the Extracellular side of the membrane. A helical membrane pass occupies residues 351-371 (SGIMALIASGVVMRPYVEANI). At 372-373 (SH) the chain is on the cytoplasmic side. The chain crosses the membrane as a helical span at residues 374-404 (KSHTTIKYFLKMWSSVSETLIFIFLGVSTVA). At 405–410 (GSHHWN) the chain is on the extracellular side. The helical transmembrane segment at 411 to 438 (WTFVISTLLFCLIARVLGVLGLTWFINK) threads the bilayer. At 439–444 (FRIVKL) the chain is on the cytoplasmic side. Residues 445–469 (TPKDQFIIAYGGLRGAIAFSLGYLL) form a helical membrane-spanning segment. Residues 470–475 (DKKHFP) lie on the Extracellular side of the membrane. Residues 476–505 (MCDLFLTAIITVIFFTVFVQGMTIRPLVDL) form a helical membrane-spanning segment. The tract at residues 503-545 (VDLLAVKKKQETKRSINEEIHTQFLDHLLTGIEDICGHYGHHH) is interaction with TESC. At 506 to 815 (LAVKKKQETK…EGEPFFPKGQ (310 aa)) the chain is on the cytoplasmic side. Positions 509–516 (KKKQETKR) are PI(4,5)P2-binding region. The interval 515–545 (KRSINEEIHTQFLDHLLTGIEDICGHYGHHH) is interaction with CHP2. Positions 540-545 (HYGHHH) are confers pH-dependent PI(4,5)P2 binding. Residues 552–560 (RFNKKYVKK) are PI(4,5)P2-binding region. A phosphoserine mark is found at Ser-599 and Ser-602. Thr-603 is modified (phosphothreonine). Residues Ser-605 and Ser-648 each carry the phosphoserine modification. The interaction with TESC stretch occupies residues 633 to 815 (KILRNNLQKT…EGEPFFPKGQ (183 aa)). The tract at residues 633–815 (KILRNNLQKT…EGEPFFPKGQ (183 aa)) is interaction with CALM1. The segment at 684 to 687 (LTVP) is interaction with PPP3CA. Ser-693, Ser-697, and Ser-703 each carry phosphoserine. Positions 715-720 (PVITID) are interaction with PPP3CA. Residues Ser-723, Ser-726, and Ser-729 each carry the phosphoserine modification. The disordered stretch occupies residues 744-815 (LSRDPAKVAE…EGEPFFPKGQ (72 aa)). Residue Thr-779 is modified to Phosphothreonine. Positions 782 to 791 (PSDSPSSQRI) are enriched in polar residues. Residues Ser-785, Ser-787, and Ser-796 each carry the phosphoserine modification.

The protein belongs to the monovalent cation:proton antiporter 1 (CPA1) transporter (TC 2.A.36) family. As to quaternary structure, homodimer; dimerization is crucial for its function. Oligomer. Interacts with CALM1 in a calcium-dependent manner. Interacts with TESC. Interacts (via the C-terminal domain) with CHP1; the interaction occurs at the plasma membrane in a calcium-dependent manner and facilitates the maturation, cell surface expression, and function of SLC9A3. Interacts with CHP2; the interaction occurs in a calcium-dependent manner. Interacts with EZR; regulates the cytoskeletal interactions of SLC9A1 and promotes stress fiber formation. O-glycosylated. Post-translationally, ubiquitinated, leading to its degradation by the proteasome. Ubiquitination is reduced by CHP1. In terms of processing, phosphorylation at Thr-779 increases SLC9A1 activity. Specifically dephosphorylated at Thr-779 by PPP3CA that negatively regulates SLC9A1 activity. Phosphorylation at Ser-648 by AKT1 reduces SLC9A1 binding to CALM1. Palmitoylated; may play a major role in SLC9A1 regulation. Kidney and intestine.

It localises to the cell membrane. It is found in the basolateral cell membrane. It catalyses the reaction Na(+)(in) + H(+)(out) = Na(+)(out) + H(+)(in). The catalysed reaction is Li(+)(out) + H(+)(in) = Li(+)(in) + H(+)(out). The enzyme catalyses Li(+)(in) + Na(+)(out) = Li(+)(out) + Na(+)(in). Its activity is regulated as follows. Activated at acidic pHs. Inhibited by amiloride and 5-amino-substituted derivatives. Inhibited by cariporide and eniporide. Phosphatidylinositol 4,5-bisphosphate (PI(4,5)P2) and phosphatidylinositol 3,4,5-trisphosphate (PI(3,4,5)P3) bind and differentially regulate SLC9A1 activity. Electroneutral Na(+) /H(+) antiporter that extrudes Na(+) in exchange for external protons driven by the inward sodium ion chemical gradient, protecting cells from acidification that occurs from metabolism. Exchanges intracellular H(+) ions for extracellular Na(+) in 1:1 stoichiometry. Plays a key role in maintening intracellular pH neutral and cell volume, and thus is important for cell growth, proliferation, migration and survival. In addition, can transport lithium Li(+) and also functions as a Na(+)/Li(+) antiporter. SLC9A1 also functions in membrane anchoring and organization of scaffolding complexes that coordinate signaling inputs. The protein is Sodium/hydrogen exchanger 1 of Homo sapiens (Human).